The following is a 593-amino-acid chain: MDVRRRSINSIHQIPSVGGTAPPMLKPKQPTKVDAVDLPDSPKASDALPLPLYITNGVFFTLFFTVVYYLLVRWREKIRNSTPLHVVTLSEIAAIFTFVASFIYLLGFFGIGLVQPFTSRSSHDDVWGVDDDEDVDEIVLKEDTRTVPCAAAPVDCPLPPIKPKVVDPVPISPPSSEEDEEIIKSVVEGTTPSYALESKLGDSHRAAAIRREALQRMTKKSLAGLPLDGFDYDSILGQCCEMPVGYVQIPVGIAGPLLLDGREYSVPMATTEGCLVASTNRGCKAIFACGGATSVLLRDAMTRAPVVRFGSAKRAADLKFFLENPLNFETLAAVFNSSSRFGKLQNIKCAIAGKNLYMRYSCSTGDAMGMNMISKGVQNVLDFLQDDFPDMDVIGISGNYCSDKKPAAVNWIEGRGKSVVCEAVIKEEVVKKVLKTNVASLVELNMLKNLTGSAMAGALGGFNAHASNIVSAVYLATGQDPAQNVESSHCITMMEAINDGKDLHVSVTMPSIEVGTVGGGTQLASQSACLNLLGVKGASKEAPGSNARLLATIVAGSVLAGELSLMSAIAAGQLVNSHMKYNRSNKDVTKASS.

A disordered region spans residues 1–36 (MDVRRRSINSIHQIPSVGGTAPPMLKPKQPTKVDAV). The next 2 membrane-spanning stretches (helical) occupy residues 52 to 72 (LYITNGVFFTLFFTVVYYLLV) and 94 to 114 (AIFTFVASFIYLLGFFGIGLV). The linker stretch occupies residues 115–177 (QPFTSRSSHD…PVPISPPSSE (63 aa)). The tract at residues 178–593 (EDEEIIKSVV…SNKDVTKASS (416 aa)) is catalytic. The active-site Charge relay system is Glu-272. N-linked (GlcNAc...) asparagine glycosylation is present at Asn-336. The active-site Charge relay system is the Lys-404. Residue Asn-449 is glycosylated (N-linked (GlcNAc...) asparagine). Asp-480 serves as the catalytic Charge relay system. His-578 acts as the Proton donor in catalysis. Asn-582 is a glycosylation site (N-linked (GlcNAc...) asparagine).

The protein belongs to the HMG-CoA reductase family.

The protein resides in the endoplasmic reticulum membrane. It catalyses the reaction (R)-mevalonate + 2 NADP(+) + CoA = (3S)-3-hydroxy-3-methylglutaryl-CoA + 2 NADPH + 2 H(+). Its pathway is metabolic intermediate biosynthesis; (R)-mevalonate biosynthesis; (R)-mevalonate from acetyl-CoA: step 3/3. Catalyzes the synthesis of mevalonate. The specific precursor of all isoprenoid compounds present in plants. The chain is 3-hydroxy-3-methylglutaryl-coenzyme A reductase from Camptotheca acuminata (Happy tree).